Here is a 228-residue protein sequence, read N- to C-terminus: Mitochondrial assembly of ribosomal large subunit protein 1 (228 aa).

The tract at residues 53–77 (SLTRGLHHGPQPEERTAGDARLQPG) is disordered.

The protein belongs to the Iojap/RsfS family. As to quaternary structure, associates with the mitochondrial ribosome large subunit (39S) via interaction with MRPL12 and/or MRPL14. The interaction generates steric hindrance that is expected to prevent premature association of the 28S and 39S ribosomal subunits. Identified in a complex composed of MALSU1, MIEF1 upstream open reading frame protein and NDUFAB1; within the trimeric complex, MIEF1 upstream open reading frame protein functions as a bridging scaffold that interacts with MALSU1 on one side, and with NDUFAB1 on the other side. Interacts with MRPL12 and MRPL14.

It localises to the mitochondrion matrix. Functionally, required for normal mitochondrial ribosome function and mitochondrial translation. May play a role in ribosome biogenesis by preventing premature association of the 28S and 39S ribosomal subunits. Interacts with mitochondrial ribosomal protein uL14m (MRPL14), probably blocking formation of intersubunit bridge B8, preventing association of the 28S and 39S ribosomal subunits. Addition to isolated mitochondrial ribosomal subunits partially inhibits translation, probably by interfering with the association of the 28S and 39S ribosomal subunits and the formation of functional ribosomes. May also participate in the assembly and/or regulation of the stability of the large subunit of the mitochondrial ribosome. May function as a ribosomal silencing factor. The protein is Mitochondrial assembly of ribosomal large subunit protein 1 (Malsu1) of Mus musculus (Mouse).